Reading from the N-terminus, the 393-residue chain is Fractalkine (393 aa).

Residues 1-24 (MAPSQLAWLLRLAAFFHLCTLLAG) form the signal peptide. The tract at residues 25 to 100 (QHLGMTKCNI…HQTAALTRNG (76 aa)) is chemokine and involved in interaction with ITGAV:ITGB3 and ITGA4:ITGB1. At 25–337 (QHLGMTKCNI…PDSQAATRRQ (313 aa)) the chain is on the extracellular side. Disulfide bonds link C32-C58 and C36-C74. The N-linked (GlcNAc...) asparagine glycan is linked to N33. Residues 101–337 (GKFEKRVDNV…PDSQAATRRQ (237 aa)) form a mucin-like stalk region. Disordered stretches follow at residues 114–184 (ITSA…PQST) and 213–303 (EKAT…SGSQ). 2 stretches are compositionally biased toward polar residues: residues 153-172 (GTSQ…TSKA) and 223-240 (ALST…NVGS). A helical membrane pass occupies residues 338–358 (AVGLLAFLGLLFCLGVAMFAY). Residues 359–393 (QSLQGCPRKMAGEMVEGLRYVPRSCGSNSYVLVPV) are Cytoplasmic-facing.

The protein belongs to the intercrine delta family. In terms of assembly, monomer. Forms a ternary complex with CX3CR1 and ITGAV:ITGB3 or ITGA4:ITGB1. A soluble short form may be released by proteolytic cleavage from the long membrane-anchored form. Highest levels in brain (neurons). Significant levels in kidney, heart, lung and adrenal gland.

Its subcellular location is the cell membrane. It is found in the secreted. Functionally, chemokine that acts as a ligand for both CX3CR1 and integrins ITGAV:ITGB3 and ITGA4:ITGB1. The CX3CR1-CX3CL1 signaling exerts distinct functions in different tissue compartments, such as immune response, inflammation, cell adhesion and chemotaxis. Regulates leukocyte adhesion and migration processes at the endothelium. Can activate integrins in both a CX3CR1-dependent and CX3CR1-independent manner. In the presence of CX3CR1, activates integrins by binding to the classical ligand-binding site (site 1) in integrins. In the absence of CX3CR1, binds to a second site (site 2) in integrins which is distinct from site 1 and enhances the binding of other integrin ligands to site 1. Its function is as follows. The soluble form is chemotactic for T-cells and monocytes, but not for neutrophils. The membrane-bound form promotes adhesion of those leukocytes to endothelial cells. This Rattus norvegicus (Rat) protein is Fractalkine (Cx3cl1).